Consider the following 210-residue polypeptide: Resolvase (210 aa).

One can recognise a Resolvase/invertase-type recombinase catalytic domain in the interval 6-150 (VARVYLRVSS…EDRRERQRQG (145 aa)). Ser-14 acts as the O-(5'-phospho-DNA)-serine intermediate in catalysis. The H-T-H motif DNA-binding region spans 191-210 (GVSVSQVKRVWAQNQTKDKV).

Belongs to the site-specific recombinase resolvase family.

Its function is as follows. Site-specific recombination protein. This is Resolvase (stbA) from Pseudomonas syringae pv. tomato.